The primary structure comprises 425 residues: Serine--tRNA ligase (425 aa).

L-serine is bound at residue 230-232 (TAE). 261-263 (RSE) lines the ATP pocket. L-serine is bound at residue Glu-284. Residue 348–351 (EISS) participates in ATP binding. Ser-384 serves as a coordination point for L-serine.

The protein belongs to the class-II aminoacyl-tRNA synthetase family. Type-1 seryl-tRNA synthetase subfamily. As to quaternary structure, homodimer. The tRNA molecule binds across the dimer.

It localises to the cytoplasm. The enzyme catalyses tRNA(Ser) + L-serine + ATP = L-seryl-tRNA(Ser) + AMP + diphosphate + H(+). It catalyses the reaction tRNA(Sec) + L-serine + ATP = L-seryl-tRNA(Sec) + AMP + diphosphate + H(+). It participates in aminoacyl-tRNA biosynthesis; selenocysteinyl-tRNA(Sec) biosynthesis; L-seryl-tRNA(Sec) from L-serine and tRNA(Sec): step 1/1. Its function is as follows. Catalyzes the attachment of serine to tRNA(Ser). Is also able to aminoacylate tRNA(Sec) with serine, to form the misacylated tRNA L-seryl-tRNA(Sec), which will be further converted into selenocysteinyl-tRNA(Sec). This is Serine--tRNA ligase from Streptococcus pyogenes serotype M3 (strain SSI-1).